The following is a 399-amino-acid chain: Homeobox protein ceh-39 (399 aa).

Disordered stretches follow at residues 32–91 (PEPA…GDTE) and 158–187 (AKKSRGRTAPRTPKSLETSKPGRGVKRPAS). Over residues 60–79 (SSMCGSSSSSSSSSYSSGSS) the composition is skewed to low complexity. A DNA-binding region (CUT) is located at residues 205–291 (NRQIGDDEEL…VRRALCFMKK (87 aa)). The homeobox DNA-binding region spans 315–374 (SDERIRRFTFTQTQLDSLHTVFQQQDRPNREMQQALSATLKLNRSTVGNFFMNARRRLPK).

It belongs to the CUT homeobox family. As to expression, expressed in hermaphrodite gonads.

It is found in the nucleus. Its subcellular location is the chromosome. Its function is as follows. Transcriptional regulator which is involved in the sex determination and X chromosome dosage compensation pathways. Directly binds to 5'-ATTGAT-3' sites in the promoter of sex-determining factor xol-1 to negatively regulate its expression and promote hermaphrodite development. Associates with condensed DNA during mitosis. The polypeptide is Homeobox protein ceh-39 (Caenorhabditis elegans).